The sequence spans 128 residues: Large ribosomal subunit protein bL19 (128 aa).

Belongs to the bacterial ribosomal protein bL19 family.

Its function is as follows. This protein is located at the 30S-50S ribosomal subunit interface and may play a role in the structure and function of the aminoacyl-tRNA binding site. In Janthinobacterium sp. (strain Marseille) (Minibacterium massiliensis), this protein is Large ribosomal subunit protein bL19.